The chain runs to 642 residues: Threonine--tRNA ligase (642 aa).

The region spanning Met-1 to Thr-61 is the TGS domain. A catalytic region spans residues Asp-243–Pro-534. Cys-334, His-385, and His-511 together coordinate Zn(2+).

It belongs to the class-II aminoacyl-tRNA synthetase family. In terms of assembly, homodimer. Zn(2+) serves as cofactor.

It is found in the cytoplasm. The enzyme catalyses tRNA(Thr) + L-threonine + ATP = L-threonyl-tRNA(Thr) + AMP + diphosphate + H(+). Catalyzes the attachment of threonine to tRNA(Thr) in a two-step reaction: L-threonine is first activated by ATP to form Thr-AMP and then transferred to the acceptor end of tRNA(Thr). Also edits incorrectly charged L-seryl-tRNA(Thr). This Shewanella amazonensis (strain ATCC BAA-1098 / SB2B) protein is Threonine--tRNA ligase.